The chain runs to 365 residues: 2-aminoethylphosphonate--pyruvate transaminase (365 aa).

At Lys194 the chain carries N6-(pyridoxal phosphate)lysine.

It belongs to the class-V pyridoxal-phosphate-dependent aminotransferase family. PhnW subfamily. Homodimer. Requires pyridoxal 5'-phosphate as cofactor.

The enzyme catalyses (2-aminoethyl)phosphonate + pyruvate = phosphonoacetaldehyde + L-alanine. Its function is as follows. Involved in phosphonate degradation. This chain is 2-aminoethylphosphonate--pyruvate transaminase, found in Bacillus cereus (strain AH187).